A 131-amino-acid polypeptide reads, in one-letter code: D-ribose pyranase (131 aa).

Histidine 20 (proton donor) is an active-site residue. Residues aspartate 28, histidine 98, and 120 to 122 (YAN) each bind substrate.

This sequence belongs to the RbsD / FucU family. RbsD subfamily. As to quaternary structure, homodecamer.

The protein resides in the cytoplasm. It carries out the reaction beta-D-ribopyranose = beta-D-ribofuranose. It functions in the pathway carbohydrate metabolism; D-ribose degradation; D-ribose 5-phosphate from beta-D-ribopyranose: step 1/2. Its function is as follows. Catalyzes the interconversion of beta-pyran and beta-furan forms of D-ribose. The chain is D-ribose pyranase from Clostridium novyi (strain NT).